Here is a 288-residue protein sequence, read N- to C-terminus: Glutamate racemase (288 aa).

Substrate-binding positions include 10–11 and 42–43; these read DS and YG. The Proton donor/acceptor role is filled by C73. Residue 74 to 75 participates in substrate binding; that stretch reads NT. C184 acts as the Proton donor/acceptor in catalysis. A substrate-binding site is contributed by 185 to 186; the sequence is TH.

This sequence belongs to the aspartate/glutamate racemases family.

It catalyses the reaction L-glutamate = D-glutamate. It functions in the pathway cell wall biogenesis; peptidoglycan biosynthesis. Functionally, provides the (R)-glutamate required for cell wall biosynthesis. In Corynebacterium kroppenstedtii (strain DSM 44385 / JCM 11950 / CIP 105744 / CCUG 35717), this protein is Glutamate racemase.